The primary structure comprises 191 residues: Peptidyl-tRNA hydrolase (191 aa).

A tRNA-binding site is contributed by Y14. H19 serves as the catalytic Proton acceptor. Residues F64, N66, and N112 each coordinate tRNA.

Belongs to the PTH family. In terms of assembly, monomer.

It localises to the cytoplasm. It catalyses the reaction an N-acyl-L-alpha-aminoacyl-tRNA + H2O = an N-acyl-L-amino acid + a tRNA + H(+). Its function is as follows. Hydrolyzes ribosome-free peptidyl-tRNAs (with 1 or more amino acids incorporated), which drop off the ribosome during protein synthesis, or as a result of ribosome stalling. In terms of biological role, catalyzes the release of premature peptidyl moieties from peptidyl-tRNA molecules trapped in stalled 50S ribosomal subunits, and thus maintains levels of free tRNAs and 50S ribosomes. In Novosphingobium aromaticivorans (strain ATCC 700278 / DSM 12444 / CCUG 56034 / CIP 105152 / NBRC 16084 / F199), this protein is Peptidyl-tRNA hydrolase.